The chain runs to 214 residues: Phosphatidylserine decarboxylase proenzyme (214 aa).

S182 functions as the Schiff-base intermediate with substrate; via pyruvic acid in the catalytic mechanism. Pyruvic acid (Ser); by autocatalysis is present on S182.

Belongs to the phosphatidylserine decarboxylase family. PSD-A subfamily. As to quaternary structure, heterodimer of a large membrane-associated beta subunit and a small pyruvoyl-containing alpha subunit. Pyruvate is required as a cofactor. Post-translationally, is synthesized initially as an inactive proenzyme. Formation of the active enzyme involves a self-maturation process in which the active site pyruvoyl group is generated from an internal serine residue via an autocatalytic post-translational modification. Two non-identical subunits are generated from the proenzyme in this reaction, and the pyruvate is formed at the N-terminus of the alpha chain, which is derived from the carboxyl end of the proenzyme. The post-translation cleavage follows an unusual pathway, termed non-hydrolytic serinolysis, in which the side chain hydroxyl group of the serine supplies its oxygen atom to form the C-terminus of the beta chain, while the remainder of the serine residue undergoes an oxidative deamination to produce ammonia and the pyruvoyl prosthetic group on the alpha chain.

The protein resides in the cell membrane. The catalysed reaction is a 1,2-diacyl-sn-glycero-3-phospho-L-serine + H(+) = a 1,2-diacyl-sn-glycero-3-phosphoethanolamine + CO2. It participates in phospholipid metabolism; phosphatidylethanolamine biosynthesis; phosphatidylethanolamine from CDP-diacylglycerol: step 2/2. Its function is as follows. Catalyzes the formation of phosphatidylethanolamine (PtdEtn) from phosphatidylserine (PtdSer). The polypeptide is Phosphatidylserine decarboxylase proenzyme (Burkholderia lata (strain ATCC 17760 / DSM 23089 / LMG 22485 / NCIMB 9086 / R18194 / 383)).